We begin with the raw amino-acid sequence, 724 residues long: Pre-mRNA-splicing factor CLF1 (724 aa).

HAT repeat units lie at residues 55 to 87 (EFQA…WEAS), 89 to 121 (NEYE…MELK), 123 to 155 (RNIN…LEEL), 157 to 188 (LNVS…LEER), 190 to 221 (NELD…FEED), 223 to 262 (GQPD…METR), 264 to 298 (KEFE…FEKQ), 308 to 340 (TVLG…LEED), 352 to 386 (VEPM…LWLQ), 396 to 432 (KDYD…FEIR), 434 to 465 (LDVS…LEMR), 467 to 499 (REFD…VESA), 501 to 534 (EDFE…FEAG), 536 to 567 (GERE…MEIA), 585 to 626 (GDAD…EHGD), and 635 to 667 (DMLP…DDEK). The disordered stretch occupies residues 681-724 (QAWAQQRAGQGEEGGLSYDLPSDSESENEDEDGDNREEEGMDQD). Positions 702 to 724 (SDSESENEDEDGDNREEEGMDQD) are enriched in acidic residues.

This sequence belongs to the crooked-neck family. As to quaternary structure, associated with the spliceosome.

Its subcellular location is the nucleus. Functionally, involved in pre-mRNA splicing and cell cycle progression. Required for the spliceosome assembly and initiation of the DNA replication. This is Pre-mRNA-splicing factor CLF1 (CLF1) from Cryptococcus neoformans var. grubii serotype A (strain H99 / ATCC 208821 / CBS 10515 / FGSC 9487) (Filobasidiella neoformans var. grubii).